Here is a 187-residue protein sequence, read N- to C-terminus: UPF0301 protein YqgE (187 aa).

It belongs to the UPF0301 (AlgH) family.

The sequence is that of UPF0301 protein YqgE from Salmonella agona (strain SL483).